A 499-amino-acid polypeptide reads, in one-letter code: Potassium voltage-gated channel subfamily A member 2 (499 aa).

The disordered stretch occupies residues 1-27; the sequence is MTVATGDLTDGSVGFAGHPQDSYDPEP. Residues 1-125 are tetramerization domain; it reads MTVATGDLTD…YELGEEAMEI (125 aa). Topologically, residues 1 to 160 are cytoplasmic; sequence MTVATGDLTD…LLFEYPESSG (160 aa). The helical transmembrane segment at 161–182 threads the bilayer; it reads PARIIAIISVTVILISIVSFCL. Residues 183–221 lie on the Extracellular side of the membrane; that stretch reads ETLPVFRDENEDMHGSGGNYYSYPNSTVRFQKSNTFTDP. N-linked (GlcNAc...) asparagine glycosylation occurs at asparagine 207. Residues 222–243 form a helical membrane-spanning segment; the sequence is FFIVETLCIIWFSFEFLVRFLA. The S-palmitoyl cysteine moiety is linked to residue cysteine 244. The Cytoplasmic segment spans residues 244-254; that stretch reads CPSKAVFFTNL. The helical transmembrane segment at 255-275 threads the bilayer; the sequence is MNIIDIVAIIPYFITLGTELA. Residues 276–289 are Extracellular-facing; it reads EKTEDGQQGQQAMS. Residues 290-310 traverse the membrane as a helical; Voltage-sensor segment; sequence LAILRVIRLVRVFRIFKLSRH. Residues 311–325 lie on the Cytoplasmic side of the membrane; it reads SKGLQILGQTLNASM. The S4-S5 linker stretch occupies residues 312 to 325; the sequence is KGLQILGQTLNASM. The chain crosses the membrane as a helical span at residues 326 to 347; it reads RELGLLIFFLFIGVILFSSAVF. Over 348–361 the chain is Extracellular; it reads FAEADERDSQFPSI. An intramembrane region (helical) is located at residues 362-373; sequence PDAFWWAVVSMT. A Selectivity filter motif is present at residues 374-379; it reads TVGYGD. Residues 374–381 lie within the membrane without spanning it; the sequence is TVGYGDMV. Residues 382 to 388 are Extracellular-facing; sequence PTTIGGK. A helical membrane pass occupies residues 389–417; the sequence is IVGSLCAIAGVLTIALPVPVIVSNFNYFY. Topologically, residues 418 to 499 are cytoplasmic; that stretch reads HRETEGEEQA…VNITKMLTDV (82 aa). The PDZ-binding signature appears at 497-499; the sequence is TDV.

The protein belongs to the potassium channel family. A (Shaker) (TC 1.A.1.2) subfamily. Kv1.2/KCNA2 sub-subfamily. Homotetramer and heterotetramer with other family members. Detected in tadpole brain and spinal cord.

It localises to the cell membrane. The enzyme catalyses K(+)(in) = K(+)(out). Functionally, voltage-gated potassium channel that mediates transmembrane potassium transport in excitable membranes, primarily in the brain and central nervous system. Prevents aberrant action potential firing and regulates neuronal output. Forms tetrameric potassium-selective channels through which potassium ions pass in accordance with their electrochemical gradient. The channel alternates between opened and closed conformations in response to the voltage difference across the membrane. Can form functional homotetrameric channels and heterotetrameric channels with other family members; the channels characteristics depend critically on the types of channel-forming alpha subunits that are present. Channel properties are modulated by cytoplasmic beta subunits that regulate the subcellular location of the alpha subunits. In vivo, membranes probably contain a mixture of heteromeric potassium channel complexes, making it difficult to assign currents observed in intact tissues to any particular potassium channel family member. Homotetrameric KCNA2 forms a delayed-rectifier potassium channel that opens in response to membrane depolarization, followed by slow spontaneous channel closure. Regulates neuronal excitability and plays a role as pacemaker in the regulation of neuronal action potentials. KCNA2-containing channels play a presynaptic role and prevent hyperexcitability and aberrant action potential firing. Response to toxins that are selective for KCNA2-containing potassium channels suggests that in Purkinje cells, dendritic subthreshold KCNA2-containing potassium channels prevent random spontaneous calcium spikes, suppressing dendritic hyperexcitability without hindering the generation of somatic action potentials, and thereby play an important role in motor coordination. Plays a role in the induction of long-term potentiation of neuron excitability in the CA3 layer of the hippocampus. This Xenopus laevis (African clawed frog) protein is Potassium voltage-gated channel subfamily A member 2 (kcna2).